The following is a 466-amino-acid chain: Methylenomycin A resistance protein (466 aa).

14 helical membrane passes run 16-36, 56-76, 83-103, 113-133, 146-166, 168-188, 203-223, 234-254, 276-296, 305-325, 337-357, 367-387, 409-429, and 434-454; these read ISVL…VTVV, WVVD…GALA, TIYI…AASI, LIQG…LAAS, LWAA…GVLV, LAGW…ALIS, VNII…YALI, VILV…LREI, FIGF…SLFL, FMAG…NLLF, LMFV…VLIS, VLMS…TTVI, IGAL…ATWY, and FAFL…WLFL.

Belongs to the major facilitator superfamily. EmrB family.

The protein resides in the cell membrane. In terms of biological role, resistance to the epoxide antibiotic methylenomycin. The chain is Methylenomycin A resistance protein (mmr) from Bacillus subtilis (strain 168).